A 303-amino-acid chain; its full sequence is Energy-coupling factor transporter ATP-binding protein EcfA2 (303 aa).

The 244-residue stretch at 17–260 (LSVSNLSCFF…EAFLAHTTII (244 aa)) folds into the ABC transporter domain. 54–61 (GDSGSGKS) serves as a coordination point for ATP.

It belongs to the ABC transporter superfamily. Energy-coupling factor EcfA family. As to quaternary structure, forms a stable energy-coupling factor (ECF) transporter complex composed of 2 membrane-embedded substrate-binding proteins (S component), 2 ATP-binding proteins (A component) and 2 transmembrane proteins (T component).

It localises to the cell membrane. In terms of biological role, ATP-binding (A) component of a common energy-coupling factor (ECF) ABC-transporter complex. Unlike classic ABC transporters this ECF transporter provides the energy necessary to transport a number of different substrates. In Mycoplasma pneumoniae (strain ATCC 29342 / M129 / Subtype 1) (Mycoplasmoides pneumoniae), this protein is Energy-coupling factor transporter ATP-binding protein EcfA2.